Consider the following 419-residue polypeptide: Enolase (419 aa).

Residue Gln-161 participates in (2R)-2-phosphoglycerate binding. Glu-205 serves as the catalytic Proton donor. Residues Asp-240, Glu-283, and Asp-309 each contribute to the Mg(2+) site. Lys-334, Arg-363, Ser-364, and Lys-385 together coordinate (2R)-2-phosphoglycerate. Lys-334 functions as the Proton acceptor in the catalytic mechanism.

The protein belongs to the enolase family. The cofactor is Mg(2+).

The protein resides in the cytoplasm. It is found in the secreted. Its subcellular location is the cell surface. It catalyses the reaction (2R)-2-phosphoglycerate = phosphoenolpyruvate + H2O. Its pathway is carbohydrate degradation; glycolysis; pyruvate from D-glyceraldehyde 3-phosphate: step 4/5. In terms of biological role, catalyzes the reversible conversion of 2-phosphoglycerate (2-PG) into phosphoenolpyruvate (PEP). It is essential for the degradation of carbohydrates via glycolysis. The polypeptide is Enolase (Saccharolobus islandicus (strain Y.G.57.14 / Yellowstone #1) (Sulfolobus islandicus)).